The chain runs to 188 residues: MADQADLLESPQFEEETSMQKFKRRLKEEPLIPLGCAATCYALYRAYRSGKAKDSVEMNRMFRARIYAQFFTLLAVVAGGMYYKTERKQRREFERKVEERKAQEKRDAWLRELEAREKEDKGWRERHAAVSEAANNPVGVSAVVAGKKEEEEKGVDGNVNQAPQEEGGVKRGTGILDAVKALVRGKKD.

An HIG1 domain is found at 3–94; it reads DQADLLESPQ…TERKQRREFE (92 aa). 2 helical membrane-spanning segments follow: residues 30–46 and 66–83; these read PLIP…LYRA and IYAQ…GMYY. Residues 83–119 are a coiled coil; the sequence is YKTERKQRREFERKVEERKAQEKRDAWLRELEAREKE. The disordered stretch occupies residues 147–171; sequence KKEEEEKGVDGNVNQAPQEEGGVKR.

The protein belongs to the RCF1 family. In terms of assembly, associates with the respiratory chain complex III/complex IV supercomplex.

Its subcellular location is the mitochondrion membrane. Functionally, cytochrome c oxidase subunit which plays a role in assembly of respiratory supercomplexes. This Talaromyces stipitatus (strain ATCC 10500 / CBS 375.48 / QM 6759 / NRRL 1006) (Penicillium stipitatum) protein is Respiratory supercomplex factor 1, mitochondrial (rcf1).